A 511-amino-acid chain; its full sequence is ATP synthase subunit alpha 2 (511 aa).

An ATP-binding site is contributed by 173–180 (GDRQTGKS).

It belongs to the ATPase alpha/beta chains family. In terms of assembly, F-type ATPases have 2 components, CF(1) - the catalytic core - and CF(0) - the membrane proton channel. CF(1) has five subunits: alpha(3), beta(3), gamma(1), delta(1), epsilon(1). CF(0) has three main subunits: a(1), b(2) and c(9-12). The alpha and beta chains form an alternating ring which encloses part of the gamma chain. CF(1) is attached to CF(0) by a central stalk formed by the gamma and epsilon chains, while a peripheral stalk is formed by the delta and b chains.

It localises to the cell inner membrane. It catalyses the reaction ATP + H2O + 4 H(+)(in) = ADP + phosphate + 5 H(+)(out). Its function is as follows. Produces ATP from ADP in the presence of a proton gradient across the membrane. The alpha chain is a regulatory subunit. This is ATP synthase subunit alpha 2 from Nitrosospira multiformis (strain ATCC 25196 / NCIMB 11849 / C 71).